A 366-amino-acid chain; its full sequence is Beta sliding clamp (366 aa).

This sequence belongs to the beta sliding clamp family. Forms a ring-shaped head-to-tail homodimer around DNA which binds and tethers DNA polymerases and other proteins to the DNA. The DNA replisome complex has a single clamp-loading complex (3 tau and 1 each of delta, delta', psi and chi subunits) which binds 3 Pol III cores (1 core on the leading strand and 2 on the lagging strand) each with a beta sliding clamp dimer. Additional proteins in the replisome are other copies of gamma, psi and chi, Ssb, DNA helicase and RNA primase.

Its subcellular location is the cytoplasm. Its function is as follows. Confers DNA tethering and processivity to DNA polymerases and other proteins. Acts as a clamp, forming a ring around DNA (a reaction catalyzed by the clamp-loading complex) which diffuses in an ATP-independent manner freely and bidirectionally along dsDNA. Initially characterized for its ability to contact the catalytic subunit of DNA polymerase III (Pol III), a complex, multichain enzyme responsible for most of the replicative synthesis in bacteria; Pol III exhibits 3'-5' exonuclease proofreading activity. The beta chain is required for initiation of replication as well as for processivity of DNA replication. The protein is Beta sliding clamp (dnaN) of Buchnera aphidicola subsp. Rhopalosiphum padi.